The sequence spans 321 residues: Glucokinase (321 aa).

Position 8-13 (8-13 (GDVGGT)) interacts with ATP.

Belongs to the bacterial glucokinase family.

The protein localises to the cytoplasm. It carries out the reaction D-glucose + ATP = D-glucose 6-phosphate + ADP + H(+). This chain is Glucokinase, found in Psychromonas ingrahamii (strain DSM 17664 / CCUG 51855 / 37).